A 123-amino-acid polypeptide reads, in one-letter code: Small ribosomal subunit protein uS12 (123 aa).

The tract at residues 1–45 is disordered; it reads MPTINQLIRKKRQSGATRKKSPALQKSPQKRGVCLQVKTKTPKKP. Basic residues predominate over residues 8–21; it reads IRKKRQSGATRKKS.

It belongs to the universal ribosomal protein uS12 family. In terms of assembly, part of the 30S ribosomal subunit. Contacts proteins S8 and S17. May interact with IF1 in the 30S initiation complex.

Its function is as follows. With S4 and S5 plays an important role in translational accuracy. Functionally, interacts with and stabilizes bases of the 16S rRNA that are involved in tRNA selection in the A site and with the mRNA backbone. Located at the interface of the 30S and 50S subunits, it traverses the body of the 30S subunit contacting proteins on the other side and probably holding the rRNA structure together. The combined cluster of proteins S8, S12 and S17 appears to hold together the shoulder and platform of the 30S subunit. The protein is Small ribosomal subunit protein uS12 of Chlamydia muridarum (strain MoPn / Nigg).